A 466-amino-acid polypeptide reads, in one-letter code: Vimentin (466 aa).

2 stretches are compositionally biased toward low complexity: residues 1 to 13 (MSTR…SYRR) and 20 to 31 (TASRPSSSRSYV). The segment at 1–31 (MSTRTVSSSSYRRMFGGPGTASRPSSSRSYV) is disordered. Position 2 is an N-acetylserine (Ser2). The interval 2–95 (STRTVSSSSY…FSLADAINTE (94 aa)) is head. Position 7 is a phosphoserine; alternate (Ser7). O-linked (GlcNAc) serine; alternate glycosylation occurs at Ser7. Residues Ser8, Ser9, and Ser10 each carry the phosphoserine modification. Thr20 carries the phosphothreonine modification. A phosphoserine mark is found at Ser25 and Ser26. An O-linked (GlcNAc) threonine glycan is attached at Thr33. Ser34 is a glycosylation site (O-linked (GlcNAc) serine; alternate). Ser34 bears the Phosphoserine; by PKC; alternate mark. Residue Ser39 is modified to Phosphoserine; by CaMK2, PKA, PKC and ROCK2. Ser42, Ser47, Ser49, and Ser51 each carry phosphoserine. Tyr53 is modified (phosphotyrosine). Residue Ser55 is modified to Phosphoserine. Phosphoserine; by CDK5 and CDK1 is present on Ser56. Tyr61 bears the Phosphotyrosine mark. Phosphoserine is present on Ser66. Ser72 carries the post-translational modification Phosphoserine; by AURKB and ROCK2. Residues Ser73 and Ser87 each carry the phosphoserine modification. Residues 96 to 131 (FKNTRTNEKVELQELNDRFANYIDKVRFLEQQNKIL) are coil 1A. The stretch at 96–131 (FKNTRTNEKVELQELNDRFANYIDKVRFLEQQNKIL) forms a coiled coil. One can recognise an IF rod domain in the interval 103–411 (EKVELQELND…KLLEGEESRI (309 aa)). A Glycyl lysine isopeptide (Lys-Gly) (interchain with G-Cter in SUMO2) cross-link involves residue Lys104. Position 117 is a phosphotyrosine (Tyr117). 3 positions are modified to N6-acetyllysine; alternate: Lys120, Lys129, and Lys139. An N6-succinyllysine; alternate mark is found at Lys120 and Lys129. Glycyl lysine isopeptide (Lys-Gly) (interchain with G-Cter in SUMO2); alternate cross-links involve residues Lys120, Lys129, and Lys139. The interval 132-153 (LAELEQLKGQGKSRLGDLYEEE) is linker 1. The residue at position 144 (Ser144) is a Phosphoserine. A coiled-coil region spans residues 154 to 245 (MRELRRQVDQ…KLHDEEIQEL (92 aa)). The coil 1B stretch occupies residues 154–245 (MRELRRQVDQ…KLHDEEIQEL (92 aa)). Lys168 carries the post-translational modification N6-acetyllysine. Residue Lys188 is modified to N6-acetyllysine; alternate. Lys188 is subject to N6-succinyllysine; alternate. Position 214 is a phosphoserine (Ser214). The residue at position 223 (Lys223) is an N6-acetyllysine; alternate. Lys223 participates in a covalent cross-link: Glycyl lysine isopeptide (Lys-Gly) (interchain with G-Cter in SUMO2); alternate. Ser226 carries the post-translational modification Phosphoserine. Lys235 carries the N6-acetyllysine modification. Residues 246–268 (QAQIQEQHVQIDMDVSKPDLTAA) form a linker 12 region. Lys262 is covalently cross-linked (Glycyl lysine isopeptide (Lys-Gly) (interchain with G-Cter in SUMO2)). The coil 2 stretch occupies residues 269-407 (LRDVRQQYES…ATYRKLLEGE (139 aa)). An N6-acetyllysine; alternate modification is found at Lys294. Lys294 is modified (N6-succinyllysine; alternate). Lys294 is covalently cross-linked (Glycyl lysine isopeptide (Lys-Gly) (interchain with G-Cter in SUMO2); alternate). A Phosphoserine modification is found at Ser299. Residues 303–407 (NRNNDALRQA…ATYRKLLEGE (105 aa)) are a coiled coil. Residue Lys313 forms a Glycyl lysine isopeptide (Lys-Gly) (interchain with G-Cter in SUMO2) linkage. At Ser325 the chain carries Phosphoserine. Positions 326 to 329 (LTCE) match the [IL]-x-C-x-x-[DE] motif motif. Lys373 is modified (N6-acetyllysine; alternate). A Glycyl lysine isopeptide (Lys-Gly) (interchain with G-Cter in SUMO2); alternate cross-link involves residue Lys373. Positions 408–466 (ESRISLPLPNFSSLNLRETNLESLPLVDTHSKRTLLIKTVETRDGQVINETSQHHDDLE) are tail. Ser409, Ser412, Ser419, and Ser420 each carry phosphoserine. Thr426 is modified (phosphothreonine). A Phosphoserine modification is found at Ser430. Thr436 carries the phosphothreonine modification. Ser438 carries the post-translational modification Phosphoserine. Residue Lys439 forms a Glycyl lysine isopeptide (Lys-Gly) (interchain with G-Cter in SUMO2) linkage. Position 445 is an N6-acetyllysine; alternate (Lys445). Lys445 carries the post-translational modification N6-succinyllysine; alternate. Lys445 participates in a covalent cross-link: Glycyl lysine isopeptide (Lys-Gly) (interchain with G-Cter in SUMO2); alternate. Lys445 is covalently cross-linked (Glycyl lysine isopeptide (Lys-Gly) (interchain with G-Cter in SUMO1); alternate). 2 positions are modified to phosphothreonine: Thr446 and Thr458. Ser459 is subject to Phosphoserine.

The protein belongs to the intermediate filament family. As to quaternary structure, homomer assembled from elementary dimers. Identified in complexes that contain VIM, EZR, AHNAK, BFSP1, BFSP2, ANK2, PLEC, PRX and spectrin. Interacts with BCAS3. Interacts with LGSN. Interacts with SYNM. Interacts (via rod region) with PLEC (via CH 1 domain). Interacts with STK33. Interacts with LARP6. Interacts with RAB8B. Interacts with TOR1A; the interaction associates TOR1A with the cytoskeleton. Interacts with TOR1AIP1. Interacts with TOR1AIP1. Interacts with DIAPH1. Interacts with EPPK1; interaction is dependent of higher-order structure of intermediate filament. Interacts with the non-receptor tyrosine kinase SRMS; the interaction leads to phosphorylation of VIM. Interacts with NOD2. Interacts (via head region) with CORO1C. Interacts with HDGF. Interacts with PRKCE (via phorbol-ester/DAG-type 2 domain). Interacts with BFSP2. Interacts with PPL. Interacts with PKP1 and PKP2. Interacts with SCRIB (via PDZ domains); the interaction protects SCRIB from proteasomal degradation and facilitates SCRIB localization to intermediate filaments, the interaction is reduced by cell contact inhibition. One of the most prominent phosphoproteins in various cells of mesenchymal origin. Phosphorylation is enhanced during cell division, at which time vimentin filaments are significantly reorganized. Phosphorylation by PKN1 inhibits the formation of filaments. Filament disassembly during mitosis is promoted by phosphorylation at Ser-55 as well as by nestin. Phosphorylated at Ser-56 by CDK5 during neutrophil secretion in the cytoplasm. Phosphorylated by STK33. Phosphorylated on tyrosine residues by SRMS. Post-translationally, S-nitrosylation is induced by interferon-gamma and oxidatively-modified low-densitity lipoprotein (LDL(ox)) possibly implicating the iNOS-S100A8/9 transnitrosylase complex.

Its subcellular location is the cytoplasm. The protein localises to the cytoskeleton. The protein resides in the nucleus matrix. It is found in the cell membrane. Its function is as follows. Vimentins are class-III intermediate filaments found in various non-epithelial cells, especially mesenchymal cells. Vimentin is attached to the nucleus, endoplasmic reticulum, and mitochondria, either laterally or terminally. Plays a role in cell directional movement, orientation, cell sheet organization and Golgi complex polarization at the cell migration front. Protects SCRIB from proteasomal degradation and facilitates its localization to intermediate filaments in a cell contact-mediated manner. Functionally, involved with LARP6 in the stabilization of type I collagen mRNAs for CO1A1 and CO1A2. The protein is Vimentin (VIM) of Sus scrofa (Pig).